A 400-amino-acid polypeptide reads, in one-letter code: Enoyl-[acyl-carrier-protein] reductase [NADH] 2 (400 aa).

NAD(+)-binding positions include 48-53, 75-76, 112-113, and 141-142; these read GASSGF, FE, DA, and LA. Tyr-228 lines the substrate pocket. The active-site Proton donor is Tyr-238. Residues Lys-247 and 276–278 each bind NAD(+); that span reads LVT.

Belongs to the TER reductase family. Monomer.

It carries out the reaction a 2,3-saturated acyl-[ACP] + NAD(+) = a (2E)-enoyl-[ACP] + NADH + H(+). It functions in the pathway lipid metabolism; fatty acid biosynthesis. Functionally, involved in the final reduction of the elongation cycle of fatty acid synthesis (FAS II). Catalyzes the reduction of a carbon-carbon double bond in an enoyl moiety that is covalently linked to an acyl carrier protein (ACP). The chain is Enoyl-[acyl-carrier-protein] reductase [NADH] 2 from Vibrio vulnificus (strain YJ016).